A 1154-amino-acid chain; its full sequence is DNA-directed RNA polymerase subunit beta' (1154 aa).

4 residues coordinate Zn(2+): Cys60, Cys62, Cys75, and Cys78. Asp449, Asp451, and Asp453 together coordinate Mg(2+). 4 residues coordinate Zn(2+): Cys774, Cys848, Cys855, and Cys858.

It belongs to the RNA polymerase beta' chain family. The RNAP catalytic core consists of 2 alpha, 1 beta, 1 beta' and 1 omega subunit. When a sigma factor is associated with the core the holoenzyme is formed, which can initiate transcription. Requires Mg(2+) as cofactor. The cofactor is Zn(2+).

It catalyses the reaction RNA(n) + a ribonucleoside 5'-triphosphate = RNA(n+1) + diphosphate. Functionally, DNA-dependent RNA polymerase catalyzes the transcription of DNA into RNA using the four ribonucleoside triphosphates as substrates. This Desulforudis audaxviator (strain MP104C) protein is DNA-directed RNA polymerase subunit beta'.